We begin with the raw amino-acid sequence, 428 residues long: 2,3-bisphosphoglycerate-independent phosphoglycerate mutase 2 (428 aa).

It belongs to the BPG-independent phosphoglycerate mutase family. A-PGAM subfamily.

It carries out the reaction (2R)-2-phosphoglycerate = (2R)-3-phosphoglycerate. It participates in carbohydrate degradation; glycolysis; pyruvate from D-glyceraldehyde 3-phosphate: step 3/5. Functionally, catalyzes the interconversion of 2-phosphoglycerate and 3-phosphoglycerate. This Methanocaldococcus jannaschii (strain ATCC 43067 / DSM 2661 / JAL-1 / JCM 10045 / NBRC 100440) (Methanococcus jannaschii) protein is 2,3-bisphosphoglycerate-independent phosphoglycerate mutase 2 (apgM2).